Reading from the N-terminus, the 259-residue chain is 5'-nucleotidase SurE (259 aa).

The a divalent metal cation site is built by D8, D9, S40, and N92.

It belongs to the SurE nucleotidase family. It depends on a divalent metal cation as a cofactor.

It localises to the cytoplasm. It catalyses the reaction a ribonucleoside 5'-phosphate + H2O = a ribonucleoside + phosphate. Functionally, nucleotidase that shows phosphatase activity on nucleoside 5'-monophosphates. The chain is 5'-nucleotidase SurE from Stenotrophomonas maltophilia (strain R551-3).